Reading from the N-terminus, the 166-residue chain is Small ribosomal subunit protein uS5 (166 aa).

One can recognise an S5 DRBM domain in the interval leucine 11–valine 74.

The protein belongs to the universal ribosomal protein uS5 family. As to quaternary structure, part of the 30S ribosomal subunit. Contacts proteins S4 and S8.

Its function is as follows. With S4 and S12 plays an important role in translational accuracy. In terms of biological role, located at the back of the 30S subunit body where it stabilizes the conformation of the head with respect to the body. This chain is Small ribosomal subunit protein uS5, found in Photorhabdus laumondii subsp. laumondii (strain DSM 15139 / CIP 105565 / TT01) (Photorhabdus luminescens subsp. laumondii).